Reading from the N-terminus, the 83-residue chain is MKASMFLALAGLVLLFVVGYASESEEKEFPIELLSKIFAVDVFKGEERGCKGFGDSCTPGKNECCPNPACSNKHKWCKVYLGK.

A signal peptide spans 1-21 (MKASMFLALAGLVLLFVVGYA). The propeptide occupies 22 to 48 (SESEEKEFPIELLSKIFAVDVFKGEER). 3 disulfide bridges follow: cysteine 50-cysteine 65, cysteine 57-cysteine 70, and cysteine 64-cysteine 77. Leucine 81 carries the leucine amide modification.

This sequence belongs to the neurotoxin 10 (Hwtx-1) family. 15 (Hntx-3) subfamily. Monomer. In terms of tissue distribution, expressed by the venom gland.

The protein localises to the secreted. Lethal neurotoxin. Selectively blocks tetrodotoxin-sensitive voltage-gated sodium channels (Nav). Does not affect tetrodotoxin-resistant voltage-gated sodium channels or calcium channels. This Cyriopagopus hainanus (Chinese bird spider) protein is Mu-theraphotoxin-Hhn2m.